The sequence spans 319 residues: Aliphatic sulfonates import ATP-binding protein SsuB 1 (319 aa).

In terms of domain architecture, ABC transporter spans 63 to 282 (VTLSGVSKRF…ARASAAFAAL (220 aa)). 95 to 102 (GRSGCGKS) is a binding site for ATP.

Belongs to the ABC transporter superfamily. Aliphatic sulfonates importer (TC 3.A.1.17.2) family. In terms of assembly, the complex is composed of two ATP-binding proteins (SsuB), two transmembrane proteins (SsuC) and a solute-binding protein (SsuA).

The protein resides in the cell inner membrane. The enzyme catalyses ATP + H2O + aliphatic sulfonate-[sulfonate-binding protein]Side 1 = ADP + phosphate + aliphatic sulfonateSide 2 + [sulfonate-binding protein]Side 1.. Part of the ABC transporter complex SsuABC involved in aliphatic sulfonates import. Responsible for energy coupling to the transport system. This is Aliphatic sulfonates import ATP-binding protein SsuB 1 from Burkholderia lata (strain ATCC 17760 / DSM 23089 / LMG 22485 / NCIMB 9086 / R18194 / 383).